Consider the following 1002-residue polypeptide: MPVDFLTSDQKQNYGCYAAEPNDVQLARYFHLDERDLAFINQRRGKHNRLGIALQLTTARFLGTFLTDLTQVLPGVQHFVAVQLNIHRPEVLSRYAERDTTLREHTALIKEYYGYHEFGDFPWSFRLKRLLYTRAWLSNERPGLMFDFATAWLLQNKVLLPGATTLVRLISEIRERANQRLWKKLAALPNKWQAAQVMELLVIPEGQRVSALEQLKKGPVTVSGPAFNEALERYIRLRSLEFSRLNFSGLPAIQLRNLARYAGMASVKYIARMPQQRKLAVLTAFVKAQEITALDDAVDVLDMLILDIIREAKKTGQKKRLRTLKDLDQAALLLARACALLLDDNTDVPDLRQVIFKCVPKNRLAESVSKVNELARPQNNNFHDEMVEQYGRVKRFLPAVLRDLHFRAAPAGEHVLAAIHYLAELNGSKKRILDDAPEHIITGPWKRLVYDAEGRIQRAGYSLCLLERLQDALRRRDIWLENSDRWGDPREKLLQGEEWQTQRIPVCRALGHPVDGRKGVQQLAIQLDETWKAVASRFEKNAEVHICNEGKYPSLTISCLEKQEEPPSLLRLNNRIKQLLPPVDLTELLLEIDAQTGFTHEFAHVSESGARAQDLHISLCAVLMAEACNIGLEPLIKHNIPALTRHRLSWVKQNYLRAETLVSANARLVDFQSTLELAGRWGGGEVASADGMRFVTPVKTINSGSNRKYFGSGRGITWYNFVSDQYSGFHGIVVPGTLRDSIFVLEGLLEQQTGLNPVEIMTDTAGSSDIIFGLFWLLGYQFSPRLADAGEAVFWRVNKSANYGVLDKLARGYADLSKAESQWDEMMRTAGSLKLGTIHASELIRSLLKSSRPSGLAQAIMEVGRVNKTLYLLNYIDDEDYRRRILTQLNRGEGRHAVARAICYGQRGEIRKRYREGQEDQLGALGLVTNAVVLWNTLYMEEALSWMRRNGEEIIDEDIARLSPLMHGHINMLGHYTFTLPEDILKGELRALNLNINNELSP.

This sequence belongs to the transposase 7 family.

Its function is as follows. Required for transposition of transposon Tn1000. The polypeptide is Transposase for transposon gamma-delta (tnpA) (Escherichia coli (strain K12)).